A 42-amino-acid chain; its full sequence is Photosystem I reaction center subunit IX (42 aa).

The helical transmembrane segment at 7–27 threads the bilayer; sequence YLSTAPVIATIWFGFLAGLLI.

This sequence belongs to the PsaJ family.

It is found in the plastid. It localises to the chloroplast thylakoid membrane. Its function is as follows. May help in the organization of the PsaE and PsaF subunits. This Chaetosphaeridium globosum (Charophycean green alga) protein is Photosystem I reaction center subunit IX.